The chain runs to 515 residues: Cytochrome P450 monooxygenase nsrP (515 aa).

Residues 20–40 form a helical membrane-spanning segment; it reads FGTAAFLAVLLSALAFLSYTP. Residues asparagine 84, asparagine 406, and asparagine 411 are each glycosylated (N-linked (GlcNAc...) asparagine). Position 452 (cysteine 452) interacts with heme.

The protein belongs to the cytochrome P450 family. The cofactor is heme.

The protein resides in the membrane. The protein operates within secondary metabolite biosynthesis. Cytochrome P450 monooxygenase; part of the gene cluster that mediates the biosynthesis of the tetrahydroxanthone dimer neosartorin, which exhibits antibacterial activity. The two different monomeric units appear to be synthesized by the same set of enzymes, among which the Baeyer-Villiger monooxygenase nsrF is the key enzyme for the divergence of the biosynthetic routes. The pathway begins with the synthesis of atrochrysone thioester by the polyketide synthase nsrB. The atrochrysone carboxyl ACP thioesterase nsrC then breaks the thioester bond and releases the atrochrysone carboxylic acid from AacuL. Atrochrysone carboxylic acid is decarboxylated by the decarboxylase nsrE, and oxidized by the anthrone oxygenase nsrD to yield emodin. Emodin is then reduced to emodin hydroquinone by the oxidoreductase nsrR. A-ring reduction by the short chain dehydrogenase nsrJ, dehydration by the scytalone dehydratase-like protein nsrI and probable spontaneous re-oxidation, results in overall deoxygenation to chrysophanol. The Baeyer-Villiger monooxygenase nsrF accepts chrysophanol as a substrate to insert one oxygen atom at two different positions to yield the precursors of both monomric units. NsrF is promiscuous/flexible in interacting with the 2 (non methylated and methylated) aromatic rings of chrysophanol, thus diverging the biosynthetic pathway at this point. After the hydrolysis of the lactones, methylesterification by the methyltransferase nsrG yields respectively moniliphenone and 2,2',6'-trihydroxy-4-methyl-6-methoxya-cyldiphenylmethanone. The next steps are the hydroxylation by the FAD-dependent monooxygenase nsrK, followed by isomerization by the monooxygenase nsrQ. The short chain dehydrogenase/reductase nsrO then catalyzes the C-5 ketoreduction to give the xanthone skeleton of blennolide C and 5-acetylblennolide A. The acetyltransferase nsrL has a strict substrate specificity and uses only blennolide A but not blennolide C to yield 5-acetylblennolide A as the single-acetylated product. In the final step of the biosynthesis, the heterodimerization of the 2 xanthones, blennolide C and 5-acetylblennolide A, is catalyzed by the cytochrome P450 monooxygenase nsrP. NsrP can utilize at least three different xanthones as its substrates to perform the dimerization reaction. The sequence is that of Cytochrome P450 monooxygenase nsrP from Aspergillus novofumigatus (strain IBT 16806).